The primary structure comprises 634 residues: 1,4-alpha-glucan branching enzyme GlgB (634 aa).

Aspartate 305 serves as the catalytic Nucleophile. Glutamate 357 serves as the catalytic Proton donor.

This sequence belongs to the glycosyl hydrolase 13 family. GlgB subfamily. In terms of assembly, monomer.

The enzyme catalyses Transfers a segment of a (1-&gt;4)-alpha-D-glucan chain to a primary hydroxy group in a similar glucan chain.. Its pathway is glycan biosynthesis; glycogen biosynthesis. Its function is as follows. Catalyzes the formation of the alpha-1,6-glucosidic linkages in glycogen by scission of a 1,4-alpha-linked oligosaccharide from growing alpha-1,4-glucan chains and the subsequent attachment of the oligosaccharide to the alpha-1,6 position. The protein is 1,4-alpha-glucan branching enzyme GlgB of Lactiplantibacillus plantarum (strain ATCC BAA-793 / NCIMB 8826 / WCFS1) (Lactobacillus plantarum).